A 105-amino-acid chain; its full sequence is Heat shock protein HspQ (105 aa).

Positions 76–105 are disordered; the sequence is EMRDEHPEQPSMDELARTIRKQLQAPRLRN.

It belongs to the HspQ family.

The protein resides in the cytoplasm. Functionally, involved in the degradation of certain denaturated proteins, including DnaA, during heat shock stress. The polypeptide is Heat shock protein HspQ (Salmonella agona (strain SL483)).